A 188-amino-acid chain; its full sequence is uncharacterized protein (188 aa).

It belongs to the isochorismatase family.

This is an uncharacterized protein from Escherichia coli O157:H7.